The following is a 491-amino-acid chain: Glycogen synthase 2 (491 aa).

Position 16 (lysine 16) interacts with ADP-alpha-D-glucose.

This sequence belongs to the glycosyltransferase 1 family. Bacterial/plant glycogen synthase subfamily.

It catalyses the reaction [(1-&gt;4)-alpha-D-glucosyl](n) + ADP-alpha-D-glucose = [(1-&gt;4)-alpha-D-glucosyl](n+1) + ADP + H(+). It functions in the pathway glycan biosynthesis; glycogen biosynthesis. Synthesizes alpha-1,4-glucan chains using ADP-glucose. The chain is Glycogen synthase 2 from Nitrosococcus oceani (strain ATCC 19707 / BCRC 17464 / JCM 30415 / NCIMB 11848 / C-107).